A 214-amino-acid chain; its full sequence is ATP-dependent Clp protease proteolytic subunit 2 (214 aa).

Serine 110 serves as the catalytic Nucleophile. Histidine 135 is an active-site residue.

This sequence belongs to the peptidase S14 family. As to quaternary structure, fourteen ClpP subunits assemble into 2 heptameric rings which stack back to back to give a disk-like structure with a central cavity, resembling the structure of eukaryotic proteasomes.

The protein resides in the cytoplasm. The enzyme catalyses Hydrolysis of proteins to small peptides in the presence of ATP and magnesium. alpha-casein is the usual test substrate. In the absence of ATP, only oligopeptides shorter than five residues are hydrolyzed (such as succinyl-Leu-Tyr-|-NHMec, and Leu-Tyr-Leu-|-Tyr-Trp, in which cleavage of the -Tyr-|-Leu- and -Tyr-|-Trp bonds also occurs).. Functionally, cleaves peptides in various proteins in a process that requires ATP hydrolysis. Has a chymotrypsin-like activity. Plays a major role in the degradation of misfolded proteins. This Mycobacterium bovis (strain ATCC BAA-935 / AF2122/97) protein is ATP-dependent Clp protease proteolytic subunit 2.